Reading from the N-terminus, the 296-residue chain is Non-homologous end joining protein Ku (296 aa).

Positions 11–187 (TFGLVNIPVK…ELPEAGEPSS (177 aa)) constitute a Ku domain. Residues 254-296 (AAARRRGDEHEAPARGERRHAAAAAARTTGRPRAARASRKKRG) are disordered. Residues 258-273 (RRGDEHEAPARGERRH) are compositionally biased toward basic and acidic residues. The span at 275–285 (AAAAARTTGRP) shows a compositional bias: low complexity. Residues 286-296 (RAARASRKKRG) are compositionally biased toward basic residues.

Belongs to the prokaryotic Ku family. Homodimer. Interacts with LigD.

Its function is as follows. With LigD forms a non-homologous end joining (NHEJ) DNA repair enzyme, which repairs dsDNA breaks with reduced fidelity. Binds linear dsDNA with 5'- and 3'- overhangs but not closed circular dsDNA nor ssDNA. Recruits and stimulates the ligase activity of LigD. This is Non-homologous end joining protein Ku from Anaeromyxobacter sp. (strain K).